Reading from the N-terminus, the 541-residue chain is Calcium-dependent protein kinase 9 (541 aa).

The segment at 1 to 75 (MGNCFAKNHG…PGLSPKTTTK (75 aa)) is disordered. A lipid anchor (N-myristoyl glycine) is attached at Gly2. The span at 14–54 (PQQNGNTTRSVEVGVTNQDPPSYTPQARTTQQPEKPGSVNS) shows a compositional bias: polar residues. Residue Ser69 is modified to Phosphoserine. Residues 91–349 (YTLGKELGRG…AADVLQHPWL (259 aa)) form the Protein kinase domain. ATP contacts are provided by residues 97–105 (LGRGQFGVT) and Lys120. Asp215 functions as the Proton acceptor in the catalytic mechanism. Phosphoserine is present on Ser255. Positions 355–385 (ASDKPIDSAVLSRMKQFRAMNKLKKLALKVI) are autoinhibitory domain. EF-hand domains are found at residues 392–427 (EEIQGLKAMFANIDTDNSGTITYEELKEGLAKLGSK), 428–463 (LTEAEVKQLMDAADVDGNGSIDYIEFITATMHRHRL), 464–499 (ESNENLYKAFQHFDKDSSGYITIDELESALKEYGMG), and 500–534 (DDATIKEVLSDVDSDNDGRINYEEFCAMMRSGNPQ). Ca(2+)-binding residues include Asp405, Asp407, Ser409, Thr411, Glu416, Asp441, Asp443, Asn445, Ser447, Glu452, Asp477, Asp479, Ser481, Tyr483, Glu488, Asp512, Asp514, Asp516, Arg518, and Glu523.

Belongs to the protein kinase superfamily. Ser/Thr protein kinase family. CDPK subfamily.

Its subcellular location is the cell membrane. It carries out the reaction L-seryl-[protein] + ATP = O-phospho-L-seryl-[protein] + ADP + H(+). The enzyme catalyses L-threonyl-[protein] + ATP = O-phospho-L-threonyl-[protein] + ADP + H(+). Its activity is regulated as follows. Activated by calcium. Autophosphorylation may play an important role in the regulation of the kinase activity. Its function is as follows. May play a role in signal transduction pathways that involve calcium as a second messenger. The chain is Calcium-dependent protein kinase 9 (CPK9) from Arabidopsis thaliana (Mouse-ear cress).